Reading from the N-terminus, the 705-residue chain is Tryptophan synthase (705 aa).

The tryptophan synthase alpha chain stretch occupies residues 1-293; that stretch reads MEAIKKVFEQ…QLTPNAETAK (293 aa). Catalysis depends on proton acceptor residues Glu-49 and Asp-60. Residues 266–287 form a disordered region; sequence KGEPSRVRSPGAAQRTPSQLTP. The interval 294 to 705 is tryptophan synthase beta chain; the sequence is GVENILPARF…HVSSNAIPSK (412 aa). Lys-381 is subject to N6-(pyridoxal phosphate)lysine.

This sequence in the N-terminal section; belongs to the TrpA family. In the C-terminal section; belongs to the TrpB family. The cofactor is pyridoxal 5'-phosphate.

It carries out the reaction (1S,2R)-1-C-(indol-3-yl)glycerol 3-phosphate + L-serine = D-glyceraldehyde 3-phosphate + L-tryptophan + H2O. It functions in the pathway amino-acid biosynthesis; L-tryptophan biosynthesis; L-tryptophan from chorismate: step 5/5. This Coprinopsis cinerea (Inky cap fungus) protein is Tryptophan synthase (TRP-1).